Consider the following 144-residue polypeptide: Small ribosomal subunit protein eS19A (144 aa).

The interval 83–102 (VNRGMRPSHHRDGSGSVQRK) is disordered.

Belongs to the eukaryotic ribosomal protein eS19 family. Component of the small ribosomal subunit (SSU). Mature yeast ribosomes consist of a small (40S) and a large (60S) subunit. The 40S small subunit contains 1 molecule of ribosomal RNA (18S rRNA) and at least 33 different proteins. The large 60S subunit contains 3 rRNA molecules (25S, 5.8S and 5S rRNA) and at least 46 different proteins.

It localises to the cytoplasm. The protein localises to the nucleus. The protein resides in the nucleolus. Its function is as follows. Component of the ribosome, a large ribonucleoprotein complex responsible for the synthesis of proteins in the cell. The small ribosomal subunit (SSU) binds messenger RNAs (mRNAs) and translates the encoded message by selecting cognate aminoacyl-transfer RNA (tRNA) molecules. The large subunit (LSU) contains the ribosomal catalytic site termed the peptidyl transferase center (PTC), which catalyzes the formation of peptide bonds, thereby polymerizing the amino acids delivered by tRNAs into a polypeptide chain. The nascent polypeptides leave the ribosome through a tunnel in the LSU and interact with protein factors that function in enzymatic processing, targeting, and the membrane insertion of nascent chains at the exit of the ribosomal tunnel. eS19 is required for proper maturation of the small (40S) ribosomal subunit. Binds to 40S pre-ribosomal particles, probably required after association of NOC4 but before association of ENP1, TSR1 and RIO2 with 20/21S pre-rRNA. This Schizosaccharomyces pombe (strain 972 / ATCC 24843) (Fission yeast) protein is Small ribosomal subunit protein eS19A (rps1901).